We begin with the raw amino-acid sequence, 117 residues long: Ubiquitin-like protein 3 (117 aa).

One can recognise a Ubiquitin-like domain in the interval 10-88 (INLRLILVSG…PFGKTTVMHL (79 aa)). C113 is lipidated: S-palmitoyl cysteine. C114 carries the cysteine methyl ester modification. Residue C114 is the site of S-geranylgeranyl cysteine attachment. Positions 115–117 (VIL) are cleaved as a propeptide — removed in mature form.

It localises to the cell membrane. The polypeptide is Ubiquitin-like protein 3 (Ubl3) (Mus musculus (Mouse)).